Here is a 512-residue protein sequence, read N- to C-terminus: Histidine ammonia-lyase (512 aa).

The 5-imidazolinone (Ala-Gly) cross-link spans 142 to 144 (ASG). S143 is subject to 2,3-didehydroalanine (Ser).

It belongs to the PAL/histidase family. Post-translationally, contains an active site 4-methylidene-imidazol-5-one (MIO), which is formed autocatalytically by cyclization and dehydration of residues Ala-Ser-Gly.

The protein localises to the cytoplasm. It carries out the reaction L-histidine = trans-urocanate + NH4(+). The protein operates within amino-acid degradation; L-histidine degradation into L-glutamate; N-formimidoyl-L-glutamate from L-histidine: step 1/3. The sequence is that of Histidine ammonia-lyase from Bartonella henselae (strain ATCC 49882 / DSM 28221 / CCUG 30454 / Houston 1) (Rochalimaea henselae).